Consider the following 60-residue polypeptide: Probable tautomerase SAG1079 (60 aa).

Catalysis depends on Pro2, which acts as the Proton acceptor; via imino nitrogen.

This sequence belongs to the 4-oxalocrotonate tautomerase family.

This chain is Probable tautomerase SAG1079, found in Streptococcus agalactiae serotype V (strain ATCC BAA-611 / 2603 V/R).